We begin with the raw amino-acid sequence, 315 residues long: MLIVTGGAGFIGSNIVQALNARGREDILVVDDLTDGTKFANIADARICDYLDKDEFLRRIASGDSFGDRIEAIIHQGACSTTTEWDGRYMMENNYAYSKTLLHYCLERRIPFLYASSAATYGGGQVFCEEPQYERPLNVYGYSKALFDQYVRRVLPTADSQVAGFRYFNVYGPREQHKGSMASVAFHLRNQLLKDGSVNLFEGCDGYGDGEQRRDFIYVGDVVDVNLWFLDHPEVSGIYNVGTGRSQTFNDVAHAVLKAHEGGELQYVPFPEHLKGRYQSFTEADLTRLRGAGFDGSFLTVEEGVARYMEWLQQN.

Residues 10–11, 31–32, Lys-38, Lys-53, 76–80, and Asn-93 contribute to the NADP(+) site; these read FI, DD, and QGACS. The active-site Proton acceptor is the Tyr-140. Residue Lys-144 coordinates NADP(+). Asn-169 is a binding site for substrate. NADP(+) is bound by residues Val-170 and Lys-178. The active-site Proton acceptor is the Lys-178. Substrate contacts are provided by residues Ser-180, His-187, 201 to 204, Arg-214, and Tyr-278; that span reads FEGC.

The protein belongs to the NAD(P)-dependent epimerase/dehydratase family. HldD subfamily. In terms of assembly, homopentamer. NADP(+) serves as cofactor.

It carries out the reaction ADP-D-glycero-beta-D-manno-heptose = ADP-L-glycero-beta-D-manno-heptose. Its pathway is nucleotide-sugar biosynthesis; ADP-L-glycero-beta-D-manno-heptose biosynthesis; ADP-L-glycero-beta-D-manno-heptose from D-glycero-beta-D-manno-heptose 7-phosphate: step 4/4. Its function is as follows. Catalyzes the interconversion between ADP-D-glycero-beta-D-manno-heptose and ADP-L-glycero-beta-D-manno-heptose via an epimerization at carbon 6 of the heptose. This Syntrophotalea carbinolica (strain DSM 2380 / NBRC 103641 / GraBd1) (Pelobacter carbinolicus) protein is ADP-L-glycero-D-manno-heptose-6-epimerase.